We begin with the raw amino-acid sequence, 306 residues long: Homeobox protein Hox-C13a (306 aa).

The interval 68–90 (SVYSDISSPDTGRQCPAPQTSSS) is disordered. The segment at residues 236–295 (GRKKRVPYTKLQLKELEKEYAASKFITKDKRRRISAATNLSERQVTIWFQNRRVKEKKFI) is a DNA-binding region (homeobox).

It belongs to the Abd-B homeobox family.

The protein resides in the nucleus. In terms of biological role, sequence-specific transcription factor which is part of a developmental regulatory system that provides cells with specific positional identities on the anterior-posterior axis. The sequence is that of Homeobox protein Hox-C13a (hoxc13a) from Takifugu rubripes (Japanese pufferfish).